Consider the following 248-residue polypeptide: DNA repair protein RecO (248 aa).

The protein belongs to the RecO family.

Its function is as follows. Involved in DNA repair and RecF pathway recombination. This chain is DNA repair protein RecO, found in Bacillus cytotoxicus (strain DSM 22905 / CIP 110041 / 391-98 / NVH 391-98).